The sequence spans 56 residues: Small ribosomal subunit protein uS14 (56 aa).

C21, C24, C39, and C42 together coordinate Zn(2+).

Belongs to the universal ribosomal protein uS14 family. Zn(2+) is required as a cofactor.

The protein is Small ribosomal subunit protein uS14 (RPS29) of Griffithsia japonica (Red alga).